The primary structure comprises 138 residues: Small ribosomal subunit protein uS11c (138 aa).

The segment at 1–23 is disordered; it reads MAKPILRIGSRKNTRSSSRKNVR. Positions 9 to 23 are enriched in basic residues; that stretch reads GSRKNTRSSSRKNVR.

It belongs to the universal ribosomal protein uS11 family. As to quaternary structure, part of the 30S ribosomal subunit.

Its subcellular location is the plastid. It is found in the chloroplast. The sequence is that of Small ribosomal subunit protein uS11c from Nasturtium officinale (Watercress).